The chain runs to 240 residues: Large ribosomal subunit protein uL1 (240 aa).

The protein belongs to the universal ribosomal protein uL1 family. As to quaternary structure, part of the 50S ribosomal subunit.

Binds directly to 23S rRNA. The L1 stalk is quite mobile in the ribosome, and is involved in E site tRNA release. Its function is as follows. Protein L1 is also a translational repressor protein, it controls the translation of the L11 operon by binding to its mRNA. In Nocardioides sp. (strain ATCC BAA-499 / JS614), this protein is Large ribosomal subunit protein uL1.